We begin with the raw amino-acid sequence, 364 residues long: Geranylfarnesyl diphosphate synthase, chloroplastic (364 aa).

The transit peptide at 1–51 (MSHCTIFLYKYFPGKPRYQHCSFLHPLNHKLKSLFLPITGSRFLSNSTFSV) directs the protein to the chloroplast. Positions 72, 111, and 143 each coordinate isopentenyl diphosphate. Mg(2+) is bound by residues aspartate 150 and aspartate 156. Arginine 161 contributes to the dimethylallyl diphosphate binding site. An isopentenyl diphosphate-binding site is contributed by arginine 162. 6 residues coordinate dimethylallyl diphosphate: lysine 249, threonine 250, glutamine 287, aspartate 294, lysine 304, and lysine 314.

Belongs to the FPP/GGPP synthase family. Monomer. The cofactor is Mg(2+). Strongly expressed in glandular trichomes, and, at low levels, in leaves, stems and flowers.

The protein localises to the plastid. It localises to the chloroplast. The enzyme catalyses isopentenyl diphosphate + (2E,6E,10E)-geranylgeranyl diphosphate = (2E,6E,10E,14E)-geranylfarnesyl diphosphate + diphosphate. It catalyses the reaction 2 isopentenyl diphosphate + (2E,6E)-farnesyl diphosphate = (2E,6E,10E,14E)-geranylfarnesyl diphosphate + 2 diphosphate. It carries out the reaction 3 isopentenyl diphosphate + (2E)-geranyl diphosphate = (2E,6E,10E,14E)-geranylfarnesyl diphosphate + 3 diphosphate. The catalysed reaction is 4 isopentenyl diphosphate + dimethylallyl diphosphate = (2E,6E,10E,14E)-geranylfarnesyl diphosphate + 4 diphosphate. The protein operates within secondary metabolite biosynthesis; terpenoid biosynthesis. It participates in isoprenoid biosynthesis. In terms of biological role, involved in the biosynthesis of leucosceptrane sesterterpenoids natural products, which are playing defensive roles toward herbivorus insects (e.g. Spodoptera exigua). Catalyzes the condensation of isopentenyl pyrophosphate (IDP) with the allylic pyrophosphates to yield geranylfarnesyl diphosphate (GFDP), the C(25) prenyl diphosphate precursor to all sesterterpenoids. Geranylgeranyl diphosphate (GGPP) is the preferred substrate, however dimethylallyl diphosphate (DMADP), farnesyl diphosphate (FDP) and geranyl diphosphate (GDP) can also be used as allylic substrate. This chain is Geranylfarnesyl diphosphate synthase, chloroplastic, found in Leucosceptrum canum (Hairy white-wand).